Here is a 570-residue protein sequence, read N- to C-terminus: Urease subunit alpha (570 aa).

Residues 132–570 (GGIDTHVHFL…VPMARRYFLF (439 aa)) form the Urease domain. Positions 137, 139, and 220 each coordinate Ni(2+). K220 is modified (N6-carboxylysine). Residue H222 coordinates substrate. The Ni(2+) site is built by H249 and H275. H323 functions as the Proton donor in the catalytic mechanism. D363 contacts Ni(2+).

It belongs to the metallo-dependent hydrolases superfamily. Urease alpha subunit family. In terms of assembly, heterotrimer of UreA (gamma), UreB (beta) and UreC (alpha) subunits. Three heterotrimers associate to form the active enzyme. The cofactor is Ni cation. Carboxylation allows a single lysine to coordinate two nickel ions.

The protein localises to the cytoplasm. The enzyme catalyses urea + 2 H2O + H(+) = hydrogencarbonate + 2 NH4(+). It participates in nitrogen metabolism; urea degradation; CO(2) and NH(3) from urea (urease route): step 1/1. In Corynebacterium glutamicum (strain ATCC 13032 / DSM 20300 / JCM 1318 / BCRC 11384 / CCUG 27702 / LMG 3730 / NBRC 12168 / NCIMB 10025 / NRRL B-2784 / 534), this protein is Urease subunit alpha.